Here is a 525-residue protein sequence, read N- to C-terminus: Bifunctional pantoate ligase/cytidylate kinase (525 aa).

The segment at 1–292 is pantoate--beta-alanine ligase; that stretch reads MDNVPIIRTV…VGSARLIDNM (292 aa). 44–51 lines the ATP pocket; it reads MGALHAGH. H51 acts as the Proton donor in catalysis. Q75 is a (R)-pantoate binding site. Q75 contacts beta-alanine. 162-165 is a binding site for ATP; that stretch reads GQKD. (R)-pantoate is bound at residue Q168. ATP is bound by residues I191 and 199-202; that span reads LSSR. Positions 293–525 are cytidylate kinase; the sequence is LLDARLPILA…LYQERFPDRA (233 aa).

This sequence in the N-terminal section; belongs to the pantothenate synthetase family. In the C-terminal section; belongs to the cytidylate kinase family. Type 1 subfamily.

It is found in the cytoplasm. The enzyme catalyses (R)-pantoate + beta-alanine + ATP = (R)-pantothenate + AMP + diphosphate + H(+). It catalyses the reaction CMP + ATP = CDP + ADP. The catalysed reaction is dCMP + ATP = dCDP + ADP. It participates in cofactor biosynthesis; (R)-pantothenate biosynthesis; (R)-pantothenate from (R)-pantoate and beta-alanine: step 1/1. Functionally, catalyzes the condensation of pantoate with beta-alanine in an ATP-dependent reaction via a pantoyl-adenylate intermediate. Catalyzes the transfer of a phosphate group from ATP to either CMP or dCMP to form CDP or dCDP and ADP, respectively. In Acaryochloris marina (strain MBIC 11017), this protein is Bifunctional pantoate ligase/cytidylate kinase.